Here is a 177-residue protein sequence, read N- to C-terminus: NAD(P)H-quinone oxidoreductase subunit 6, chloroplastic (177 aa).

The next 5 membrane-spanning stretches (helical) occupy residues 10 to 30 (ILLVSLGSGLIVGGLGVVLLT), 32 to 52 (PIYSAFSSGLVLVCISLFYIP), 61 to 81 (AQLLIYVGAINVLILFAVMFM), 92 to 112 (FWTIGDGFTSVVCTSIFFSLI), and 152 to 172 (FYLPFELISIILLVSLVGAIA).

It belongs to the complex I subunit 6 family. As to quaternary structure, NDH is composed of at least 16 different subunits, 5 of which are encoded in the nucleus.

The protein localises to the plastid. Its subcellular location is the chloroplast thylakoid membrane. The catalysed reaction is a plastoquinone + NADH + (n+1) H(+)(in) = a plastoquinol + NAD(+) + n H(+)(out). It catalyses the reaction a plastoquinone + NADPH + (n+1) H(+)(in) = a plastoquinol + NADP(+) + n H(+)(out). NDH shuttles electrons from NAD(P)H:plastoquinone, via FMN and iron-sulfur (Fe-S) centers, to quinones in the photosynthetic chain and possibly in a chloroplast respiratory chain. The immediate electron acceptor for the enzyme in this species is believed to be plastoquinone. Couples the redox reaction to proton translocation, and thus conserves the redox energy in a proton gradient. This chain is NAD(P)H-quinone oxidoreductase subunit 6, chloroplastic (ndhG), found in Nuphar advena (Common spatterdock).